Reading from the N-terminus, the 372-residue chain is GDP-mannose 4,6-dehydratase (372 aa).

NADP(+)-binding positions include 9-14 (GVTGQD), 64-65 (DL), 86-90 (LGAQS), and Tyr-101. The active site involves Thr-133. Residues Glu-135 and Tyr-157 each act as nucleophile in the active site. Lys-161, His-187, and Arg-192 together coordinate NADP(+).

This sequence belongs to the NAD(P)-dependent epimerase/dehydratase family. GDP-mannose 4,6-dehydratase subfamily. NADP(+) is required as a cofactor.

It carries out the reaction GDP-alpha-D-mannose = GDP-4-dehydro-alpha-D-rhamnose + H2O. It functions in the pathway nucleotide-sugar biosynthesis; GDP-L-fucose biosynthesis via de novo pathway; GDP-L-fucose from GDP-alpha-D-mannose: step 1/2. Its function is as follows. Catalyzes the conversion of GDP-D-mannose to GDP-4-dehydro-6-deoxy-D-mannose. This chain is GDP-mannose 4,6-dehydratase, found in Vibrio cholerae.